The chain runs to 208 residues: Regulator of G-protein signaling 4 (208 aa).

S-palmitoyl cysteine attachment occurs at residues Cys-2, Cys-12, and Cys-95. An RGS domain is found at 62–178 (SLENLIHHDR…LKSPYLDLVS (117 aa)).

Post-translationally, palmitoylated on Cys-2 and/or Cys-12. Phosphorylated by cyclic GMP-dependent protein kinase. As to expression, expressed in the developing nervous system.

In terms of biological role, inhibits signal transduction by increasing the GTPase activity of G protein alpha subunits thereby driving them into their inactive GDP-bound form. Activity on G(z)-alpha is inhibited by phosphorylation of the G-protein. Activity on G(z)-alpha and G(i)-alpha-1 is inhibited by palmitoylation of the G-protein. This Gallus gallus (Chicken) protein is Regulator of G-protein signaling 4 (RGS4).